A 1647-amino-acid chain; its full sequence is Transcription elongation factor SPT6 homolog (1647 aa).

Residues 1–209 (MARNAISDDE…SKKKKYRQGS (209 aa)) are disordered. The segment covering 7–20 (SDDEEDHELEDDDG) has biased composition (acidic residues). The segment covering 21–30 (EPVHGDPAEH) has biased composition (basic and acidic residues). Residues 31-67 (DENDDEEDDDDVGNEYENDGFIVNDEDEEEEEEEDEE) are compositionally biased toward acidic residues. The span at 103–114 (KFKKRQYKRLKK) shows a compositional bias: basic residues. Residues 132-151 (DSRGGTRRSAEDKIKDRLFD) show a composition bias toward basic and acidic residues. Residues 152–191 (DVDVDDPPDDVGDEEDLVVEEDVVGSEDEMADFIVDEDDE) are compositionally biased toward acidic residues. The 72-residue stretch at 1103 to 1174 (GRIVQASVRR…QRYQVFLICK (72 aa)) folds into the S1 motif domain. The disordered stretch occupies residues 1429–1647 (PMRSPADHGS…RKSDGGGGGW (219 aa)). 2 repeat units span residues 1443–1444 (GW) and 1452–1453 (GW). Positions 1443–1647 (GWGSSQSEGG…RKSDGGGGGW (205 aa)) are 12 X 2 AA repeats of [WG]-[GW] repeats. Positions 1462 to 1471 (SGRGGEYRNG) are enriched in gly residues. Residues 1496 to 1507 (RRDDMNSDRQDG) are compositionally biased toward basic and acidic residues. 6 tandem repeats follow at residues 1511–1512 (WG), 1522–1523 (GW), 1530–1531 (GW), 1547–1548 (GW), 1563–1564 (WG), and 1574–1575 (GW). Gly residues-rich tracts occupy residues 1519–1532 (ADGG…GGWG), 1539–1552 (KTGG…GSES), 1561–1579 (GSWG…GNDS), and 1588–1600 (GGFG…GGSD). 4 tandem repeats follow at residues 1601 to 1602 (WG), 1615 to 1616 (GW), 1630 to 1631 (GW), and 1646 to 1647 (GW).

It belongs to the SPT6 family. As to quaternary structure, interacts (via N-terminus) with IWS1. Expressed in shoot apical meristem, leaf primordia, vasculature of young leaves, inflorescence meristem, floral meristem, young floral organs, developing ovules and anthers.

The protein resides in the nucleus. Its function is as follows. Transcription elongation factor that enhances the transcription elongation by RNA polymerase II (RNAPII). Plays an important role in regulating embryo apical and basal patterning during early embryogenesis, partly through negative regulation of the transcription factors PHABULOSA and PHAVOLUTA. In Arabidopsis thaliana (Mouse-ear cress), this protein is Transcription elongation factor SPT6 homolog.